A 479-amino-acid chain; its full sequence is Adenosylhomocysteinase (479 aa).

Residues Thr65, Asp145, and Glu205 each coordinate substrate. Residue 206–208 (TTT) participates in NAD(+) binding. Substrate-binding residues include Lys235 and Asp239. NAD(+) is bound by residues Asn240, 269 to 274 (GYGDVG), Glu292, Asn327, 348 to 350 (IGH), and Asn393.

The protein belongs to the adenosylhomocysteinase family. Requires NAD(+) as cofactor.

The protein localises to the cytoplasm. It catalyses the reaction S-adenosyl-L-homocysteine + H2O = L-homocysteine + adenosine. It functions in the pathway amino-acid biosynthesis; L-homocysteine biosynthesis; L-homocysteine from S-adenosyl-L-homocysteine: step 1/1. May play a key role in the regulation of the intracellular concentration of adenosylhomocysteine. The protein is Adenosylhomocysteinase of Herminiimonas arsenicoxydans.